A 683-amino-acid polypeptide reads, in one-letter code: U4/U6 small nuclear ribonucleoprotein Prp3 (683 aa).

Residues 1–87 (MALSKRELDE…HSKSSSDRSR (87 aa)) form the PWI domain. The segment covering 73-107 (GRSSRHSKSSSDRSRKRELKEVFGDDSEISKESSG) has biased composition (basic and acidic residues). The interval 73–135 (GRSSRHSKSS…IPGPPSESPG (63 aa)) is disordered. A Glycyl lysine isopeptide (Lys-Gly) (interchain with G-Cter in SUMO2) cross-link involves residue lysine 139. The disordered stretch occupies residues 153-183 (IEERKKQLSFISPPTPQPKTPSSSQPERLPI). At serine 164 the chain carries Phosphoserine. A Phosphothreonine modification is found at threonine 167. Glycyl lysine isopeptide (Lys-Gly) (interchain with G-Cter in SUMO2) cross-links involve residues lysine 244 and lysine 252. The mediates interaction with SART3 stretch occupies residues 416–550 (NLVEHPAQLN…VHISVYRVRN (135 aa)). Serine 619 carries the post-translational modification Phosphoserine.

In terms of assembly, component of the precatalytic spliceosome (spliceosome B complex). Component of the U4/U6-U5 tri-snRNP complex, a building block of the precatalytic spliceosome (spliceosome B complex). The U4/U6-U5 tri-snRNP complex is composed of the U4, U6 and U5 snRNAs and at least PRPF3, PRPF4, PRPF6, PRPF8, PRPF31, SNRNP200, TXNL4A, SNRNP40, SNRPB, SNRPD1, SNRPD2, SNRPD3, SNRPE, SNRPF, SNRPG, DDX23, CD2BP2, PPIH, SNU13, EFTUD2, SART1 and USP39, plus LSM2, LSM3, LSM4, LSM5, LSM6, LSM7 and LSM8. Interacts directly with PRPF4. Part of a heteromeric complex containing PPIH, PRPF3 and PRPF4 that is stable in the absence of RNA. Interacts with SART3; the interaction is direct and recruits the deubiquitinase USP4 to PRPF3. Interacts with PRPF19. Interacts ('Lys-63'-linked polyubiquitinated) with PRPF8 (via the MPN (JAB/Mov34) domain); may stabilize the U4/U6-U5 tri-snRNP complex. Interacts with ERCC6. Ubiquitinated. Undergoes 'Lys-63'-linked polyubiquitination by PRPF19 and deubiquitination by USP4. 'Lys-63'-linked ubiquitination increases the affinity for PRPF8 and may regulate the assembly of the U4/U6-U5 tri-snRNP complex.

It localises to the nucleus. It is found in the nucleus speckle. Functionally, plays a role in pre-mRNA splicing as component of the U4/U6-U5 tri-snRNP complex that is involved in spliceosome assembly, and as component of the precatalytic spliceosome (spliceosome B complex). The protein is U4/U6 small nuclear ribonucleoprotein Prp3 (PRPF3) of Pongo abelii (Sumatran orangutan).